Consider the following 485-residue polypeptide: D-alanine--D-alanyl carrier protein ligase (485 aa).

Residue 144–145 participates in ATP binding; that stretch reads TS. Position 189 (D189) interacts with D-alanine. An ATP-binding site is contributed by 284-289; it reads NTYGPT. V293 is a D-alanine binding site. The ATP site is built by D365 and K473. K473 contributes to the D-alanine binding site.

This sequence belongs to the ATP-dependent AMP-binding enzyme family. DltA subfamily.

It is found in the cytoplasm. The catalysed reaction is holo-[D-alanyl-carrier protein] + D-alanine + ATP = D-alanyl-[D-alanyl-carrier protein] + AMP + diphosphate. It functions in the pathway cell wall biogenesis; lipoteichoic acid biosynthesis. Its function is as follows. Catalyzes the first step in the D-alanylation of lipoteichoic acid (LTA), the activation of D-alanine and its transfer onto the D-alanyl carrier protein (Dcp) DltC. In an ATP-dependent two-step reaction, forms a high energy D-alanyl-AMP intermediate, followed by transfer of the D-alanyl residue as a thiol ester to the phosphopantheinyl prosthetic group of the Dcp. D-alanylation of LTA plays an important role in modulating the properties of the cell wall in Gram-positive bacteria, influencing the net charge of the cell wall. The sequence is that of D-alanine--D-alanyl carrier protein ligase from Staphylococcus aureus (strain Mu3 / ATCC 700698).